A 979-amino-acid chain; its full sequence is Peptidyl-glycine alpha-amidating monooxygenase (979 aa).

The first 24 residues, Met1–Ala24, serve as a signal peptide directing secretion. The segment at Met1–Gly497 is peptidylglycine alpha-hydroxylating monooxygenase. A propeptide spanning residues Phe25 to Arg34 is cleaved from the precursor. Residues Phe35–Gly869 are Intragranular-facing. Disulfide bonds link Cys46–Cys185, Cys80–Cys125, Cys113–Cys130, Cys226–Cys333, and Cys292–Cys314. Positions 106 and 107 each coordinate Cu(2+). Residues His171, His241, His243, and Met313 each contribute to the Cu(2+) site. The peptidyl-alpha-hydroxyglycine alpha-amidating lyase stretch occupies residues Asp498 to Val823. NHL repeat units lie at residues Val501–Asp544, Ala570–Arg611, Leu620–Ser665, and Gly673–Asp717. Residue Val520 coordinates Ca(2+). Arg533 lines the a protein pocket. Position 585 (His585) interacts with Zn(2+). Leu587 contributes to the Ca(2+) binding site. An intrachain disulfide couples Cys634 to Cys655. Tyr654 serves as a coordination point for a protein. His690 contributes to the Zn(2+) binding site. The cysteines at positions 702 and 713 are disulfide-linked. Arg706 provides a ligand contact to a protein. Asn765 carries N-linked (GlcNAc...) asparagine glycosylation. The NHL 5 repeat unit spans residues Gly769–Thr812. His786 lines the Zn(2+) pocket. Asp787 is a binding site for Ca(2+). Residues Val870–Ile893 traverse the membrane as a helical segment. Topologically, residues Arg894–Ser979 are cytoplasmic. 4 positions are modified to phosphoserine: Ser924, Ser925, Ser935, and Ser948. Residues Asn931–Ser948 are interaction with RASSF9. The interval Gly943–Ser979 is disordered. Phosphothreonine is present on Thr949. Position 952 is a phosphoserine; by UHMK1 (Ser952). The segment covering Glu955–Tyr968 has biased composition (acidic residues). Ser964 bears the Phosphoserine mark.

In the C-terminal section; belongs to the peptidyl-alpha-hydroxyglycine alpha-amidating lyase family. The protein in the N-terminal section; belongs to the copper type II ascorbate-dependent monooxygenase family. As to quaternary structure, monomer. Interacts with RASSF9. The cofactor is Zn(2+). Cu(2+) serves as cofactor.

The protein localises to the cytoplasmic vesicle. The protein resides in the secretory vesicle membrane. It carries out the reaction a [peptide]-C-terminal glycine + 2 L-ascorbate + O2 = a [peptide]-C-terminal (2S)-2-hydroxyglycine + 2 monodehydro-L-ascorbate radical + H2O. The catalysed reaction is a [peptide]-C-terminal (2S)-2-hydroxyglycine = a [peptide]-C-terminal amide + glyoxylate. It catalyses the reaction N-dodecanoylglycine + 2 L-ascorbate + O2 = N-dodecanoyl-(2S)-hydroxyglycine + 2 monodehydro-L-ascorbate radical + H2O. The enzyme catalyses N-dodecanoyl-(2S)-hydroxyglycine = dodecanamide + glyoxylate. It carries out the reaction N-(9Z,12Z,15Z)-octadecatrienoylglycine + 2 L-ascorbate + O2 = N-(9Z,12Z,15Z)-octadecatrienoyl-(2S)-hydroxyglycine + 2 monodehydro-L-ascorbate radical + H2O. The catalysed reaction is N-(9Z,12Z,15Z)-octadecatrienoyl-(2S)-hydroxyglycine = (9Z,12Z,15Z)-octadecatrienamide + glyoxylate. It catalyses the reaction N-(9Z-octadecenoyl)glycine + 2 L-ascorbate + O2 = N-(9Z-octadecenoyl)-(2S)-hydroxyglycine + 2 monodehydro-L-ascorbate radical + H2O. The enzyme catalyses N-(9Z-octadecenoyl)-(2S)-hydroxyglycine = (9Z)-octadecenamide + glyoxylate. It carries out the reaction N-tetradecanoylglycine + 2 L-ascorbate + O2 = N-tetradecanoyl-(2S)-hydroxyglycine + 2 monodehydro-L-ascorbate radical + H2O. The catalysed reaction is N-tetradecanoyl-(2S)-hydroxyglycine = tetradecamide + glyoxylate. It catalyses the reaction N-decanoylglycine + 2 L-ascorbate + O2 = N-decanoyl-(2S)-hydroxyglycine + 2 monodehydro-L-ascorbate radical + H2O. The enzyme catalyses N-decanoyl-(2S)-hydroxyglycine = decanamide + glyoxylate. It carries out the reaction N-octanoylglycine + 2 L-ascorbate + O2 = N-octanoyl-(2S)-hydroxyglycine + 2 monodehydro-L-ascorbate radical + H2O. The catalysed reaction is N-octanoyl-(2S)-hydroxyglycine = octanamide + glyoxylate. PAM activity is inhibited by EDTA, phenylglyoxal and diethyl pyrocarbonate. PAL activity is stimulated by cadmium and inhibited by mercury. In terms of biological role, bifunctional enzyme that catalyzes amidation of the C-terminus of proteins. Alpha-amidation is present at the C-terminus of many endocrine hormones and neuropeptides and is required for their activity. C-terminal amidation also takes place in response to protein fragmentation triggered by oxidative stress, promoting degradation of amidated protein fragments by the proteasome. Alpha-amidation involves two sequential reactions, both of which are catalyzed by separate catalytic domains of the enzyme. The first step, catalyzed by peptidyl alpha-hydroxylating monooxygenase (PHM) domain, is the copper-, ascorbate-, and O2- dependent stereospecific hydroxylation (with S stereochemistry) at the alpha-carbon (C-alpha) of the C-terminal glycine of the peptidylglycine substrate. The second step, catalyzed by the peptidylglycine amidoglycolate lyase (PAL) domain, is the zinc-dependent cleavage of the N-C-alpha bond, producing the alpha-amidated peptide and glyoxylate. Similarly, catalyzes the two-step conversion of an N-fatty acylglycine to a primary fatty acid amide and glyoxylate. This Mus musculus (Mouse) protein is Peptidyl-glycine alpha-amidating monooxygenase.